Here is a 251-residue protein sequence, read N- to C-terminus: Metallo-beta-lactamase domain-containing protein 1 (251 aa).

Zn(2+) contacts are provided by His-118, His-120, Asp-122, His-123, His-173, Asp-196, and His-235.

Belongs to the metallo-beta-lactamase superfamily. Glyoxalase II family. As to quaternary structure, homodimer. Zn(2+) serves as cofactor.

It is found in the cytoplasm. It localises to the cytosol. Its subcellular location is the nucleus. The enzyme catalyses a ribonucleotidyl-ribonucleotide-RNA + H2O = a 3'-end ribonucleotide-RNA + a 5'-end 5'-phospho-ribonucleoside-RNA + H(+). In terms of biological role, endoribonuclease that catalyzes the hydrolysis of histone-coding pre-mRNA 3'-end. Involved in histone pre-mRNA processing during the S-phase of the cell cycle, which is required for entering/progressing through S-phase. Cleaves histone pre-mRNA at a major and a minor cleavage site after the 5'-ACCCA-3' and the 5'-ACCCACA-3' sequence, respectively, and located downstream of the stem-loop. May require the presence of the HDE element located at the histone pre-RNA 3'-end to avoid non-specific cleavage. The protein is Metallo-beta-lactamase domain-containing protein 1 (Mblac1) of Rattus norvegicus (Rat).